The following is a 117-amino-acid chain: Large ribosomal subunit protein bL20c (117 aa).

This sequence belongs to the bacterial ribosomal protein bL20 family.

Its subcellular location is the plastid. The protein resides in the chloroplast. In terms of biological role, binds directly to 23S ribosomal RNA and is necessary for the in vitro assembly process of the 50S ribosomal subunit. It is not involved in the protein synthesizing functions of that subunit. The chain is Large ribosomal subunit protein bL20c from Drimys granadensis.